We begin with the raw amino-acid sequence, 170 residues long: Large ribosomal subunit protein uL15 (170 aa).

Over residues 1 to 12 (MKLHDLRPAEGA) the composition is skewed to basic and acidic residues. The disordered stretch occupies residues 1-52 (MKLHDLRPAEGAHRKRKRIGRGHGSGKGKTGGKGMMGQKARSGPGPYRTFEG). The span at 13–26 (HRKRKRIGRGHGSG) shows a compositional bias: basic residues.

Belongs to the universal ribosomal protein uL15 family. Part of the 50S ribosomal subunit.

In terms of biological role, binds to the 23S rRNA. The sequence is that of Large ribosomal subunit protein uL15 from Chloroflexus aurantiacus (strain ATCC 29366 / DSM 635 / J-10-fl).